We begin with the raw amino-acid sequence, 31 residues long: KCFEVGEFCGSPMLLGSLCCYPGWCFFVCVG.

Disulfide bonds link cysteine 2-cysteine 20, cysteine 9-cysteine 25, and cysteine 19-cysteine 29.

The protein belongs to the conotoxin O1 superfamily. Expressed by the venom duct.

It localises to the secreted. The sequence is that of Conotoxin pc6d from Conus pictus (Cone snail).